Consider the following 154-residue polypeptide: Myoglobin (154 aa).

One can recognise a Globin domain in the interval 2 to 148 (GLSDGEWTLV…FRNDMAAQYK (147 aa)). S4 carries the post-translational modification Phosphoserine. H65 serves as a coordination point for nitrite. Position 65 (H65) interacts with O2. T68 is modified (phosphothreonine). A heme b-binding site is contributed by H94.

The protein belongs to the globin family. Monomeric.

It localises to the cytoplasm. The protein localises to the sarcoplasm. It carries out the reaction Fe(III)-heme b-[protein] + nitric oxide + H2O = Fe(II)-heme b-[protein] + nitrite + 2 H(+). The catalysed reaction is H2O2 + AH2 = A + 2 H2O. In terms of biological role, monomeric heme protein which primary function is to store oxygen and facilitate its diffusion within muscle tissues. Reversibly binds oxygen through a pentacoordinated heme iron and enables its timely and efficient release as needed during periods of heightened demand. Depending on the oxidative conditions of tissues and cells, and in addition to its ability to bind oxygen, it also has a nitrite reductase activity whereby it regulates the production of bioactive nitric oxide. Under stress conditions, like hypoxia and anoxia, it also protects cells against reactive oxygen species thanks to its pseudoperoxidase activity. This chain is Myoglobin, found in Capra hircus (Goat).